We begin with the raw amino-acid sequence, 427 residues long: Carboxyl-terminal-processing protease (427 aa).

The N-terminal stretch at 1–31 is a signal peptide; that stretch reads MGKRTRRFWALAFSLLMGALIYLGNTPSALA. A PDZ domain is found at 104 to 186; sequence NLQVTTTGEL…TKVSLEILSA (83 aa). Active-site charge relay system residues include Ser-313, Asp-324, and Lys-338.

The protein belongs to the peptidase S41A family.

The protein localises to the cellular thylakoid lumen. The catalysed reaction is The enzyme shows specific recognition of a C-terminal tripeptide, Xaa-Yaa-Zaa, in which Xaa is preferably Ala or Leu, Yaa is preferably Ala or Tyr, and Zaa is preferably Ala, but then cleaves at a variable distance from the C-terminus. A typical cleavage is -Ala-Ala-|-Arg-Ala-Ala-Lys-Glu-Asn-Tyr-Ala-Leu-Ala-Ala.. Cleavage of the 16 C-terminal residues from the D1 precursor of photosystem II (PSII). This proteolytic processing is necessary to allow the light-driven assembly of the oxygen-evolving cluster (a tetranuclear manganese), which is responsible for photosynthetic water oxidation. This chain is Carboxyl-terminal-processing protease (ctpA), found in Synechocystis sp. (strain ATCC 27184 / PCC 6803 / Kazusa).